The chain runs to 476 residues: Bifunctional protein HldE (476 aa).

Residues 1–318 (MKPTLPNYDQ…AEAIHGSQDS (318 aa)) are ribokinase. 195 to 198 (NMLE) contributes to the ATP binding site. Residue Asp-264 is part of the active site. Residues 344–476 (MTNGCFDILH…IIEAIKGGRG (133 aa)) form a cytidylyltransferase region.

It in the N-terminal section; belongs to the carbohydrate kinase PfkB family. The protein in the C-terminal section; belongs to the cytidylyltransferase family. In terms of assembly, homodimer.

The enzyme catalyses D-glycero-beta-D-manno-heptose 7-phosphate + ATP = D-glycero-beta-D-manno-heptose 1,7-bisphosphate + ADP + H(+). It catalyses the reaction D-glycero-beta-D-manno-heptose 1-phosphate + ATP + H(+) = ADP-D-glycero-beta-D-manno-heptose + diphosphate. Its pathway is nucleotide-sugar biosynthesis; ADP-L-glycero-beta-D-manno-heptose biosynthesis; ADP-L-glycero-beta-D-manno-heptose from D-glycero-beta-D-manno-heptose 7-phosphate: step 1/4. It participates in nucleotide-sugar biosynthesis; ADP-L-glycero-beta-D-manno-heptose biosynthesis; ADP-L-glycero-beta-D-manno-heptose from D-glycero-beta-D-manno-heptose 7-phosphate: step 3/4. Functionally, catalyzes the phosphorylation of D-glycero-D-manno-heptose 7-phosphate at the C-1 position to selectively form D-glycero-beta-D-manno-heptose-1,7-bisphosphate. In terms of biological role, catalyzes the ADP transfer from ATP to D-glycero-beta-D-manno-heptose 1-phosphate, yielding ADP-D-glycero-beta-D-manno-heptose. The chain is Bifunctional protein HldE from Aliivibrio fischeri (strain MJ11) (Vibrio fischeri).